A 365-amino-acid chain; its full sequence is Tetraacyldisaccharide 4'-kinase (365 aa).

Residue 68–75 coordinates ATP; sequence VVGGAGKT.

Belongs to the LpxK family.

The enzyme catalyses a lipid A disaccharide + ATP = a lipid IVA + ADP + H(+). It participates in glycolipid biosynthesis; lipid IV(A) biosynthesis; lipid IV(A) from (3R)-3-hydroxytetradecanoyl-[acyl-carrier-protein] and UDP-N-acetyl-alpha-D-glucosamine: step 6/6. In terms of biological role, transfers the gamma-phosphate of ATP to the 4'-position of a tetraacyldisaccharide 1-phosphate intermediate (termed DS-1-P) to form tetraacyldisaccharide 1,4'-bis-phosphate (lipid IVA). The chain is Tetraacyldisaccharide 4'-kinase from Chlamydia pneumoniae (Chlamydophila pneumoniae).